We begin with the raw amino-acid sequence, 293 residues long: D-psicose 3-epimerase (293 aa).

Residues tyrosine 6 and alanine 107 each contribute to the substrate site. The Proton donor/acceptor role is filled by glutamate 150. Residue glutamate 150 coordinates Mn(2+). Substrate contacts are provided by residues glutamate 156 and 183 to 186; that span reads DTFH. Mn(2+) is bound by residues aspartate 183 and histidine 209. Residue arginine 215 participates in substrate binding. The Proton donor/acceptor role is filled by glutamate 244. Glutamate 244 is a binding site for Mn(2+).

It belongs to the hyi family. In terms of assembly, homotetramer. The cofactor is Mn(2+). Co(2+) serves as cofactor.

The catalysed reaction is D-allulose = keto-D-fructose. Functionally, involved in the biosynthesis of D-psicose. Catalyzes the reversible epimerization of D-fructose at the C3 position to yield D-psicose. The enzyme is highly specific for D-psicose and shows very low activity with D-tagatose. This Ruminiclostridium cellulolyticum (strain ATCC 35319 / DSM 5812 / JCM 6584 / H10) (Clostridium cellulolyticum) protein is D-psicose 3-epimerase.